A 79-amino-acid polypeptide reads, in one-letter code: DNA-directed RNA polymerase subunit omega (79 aa).

It belongs to the RNA polymerase subunit omega family. As to quaternary structure, the RNAP catalytic core consists of 2 alpha, 1 beta, 1 beta' and 1 omega subunit. When a sigma factor is associated with the core the holoenzyme is formed, which can initiate transcription.

The catalysed reaction is RNA(n) + a ribonucleoside 5'-triphosphate = RNA(n+1) + diphosphate. Functionally, promotes RNA polymerase assembly. Latches the N- and C-terminal regions of the beta' subunit thereby facilitating its interaction with the beta and alpha subunits. This chain is DNA-directed RNA polymerase subunit omega (rpoZ), found in Thermotoga maritima (strain ATCC 43589 / DSM 3109 / JCM 10099 / NBRC 100826 / MSB8).